A 218-amino-acid polypeptide reads, in one-letter code: Sodium channel regulatory subunit beta-1 (218 aa).

Positions 1 to 18 are cleaved as a signal peptide; that stretch reads MGRLLALVVGAALVSSAC. Over 19–157 the chain is Extracellular; it reads GGCVEVDSET…DKANRDMASI (139 aa). Disulfide bonds link Cys21/Cys43 and Cys40/Cys121. Residues 22-150 form the Ig-like C2-type domain; sequence VEVDSETEAV…KIHIEVVDKA (129 aa). Residues Asn93, Asn110, Asn114, and Asn135 are each glycosylated (N-linked (GlcNAc...) asparagine). The helical transmembrane segment at 158-179 threads the bilayer; it reads VSEIMMYVLIVVLTIWLVAEMI. Topologically, residues 180–218 are cytoplasmic; it reads YCYKKIAAATETAAQENASEYLAITSESKENCTGVQVAE.

This sequence belongs to the sodium channel auxiliary subunit SCN1B (TC 8.A.17) family. Voltage-gated sodium (Nav) channel consists of an ion-conducting pore-forming alpha subunit functional on its own that is regulated by one or more beta subunits. Interacts with SCN1A; regulatory subunit of SCN1A/Nav1.1. Interacts with SCN3A; regulatory subunit of SCN3A/Nav1.3. Interacts with SCN4A; regulatory subunit of SCN4A/Nav1.4. Interacts with SCN5A; regulatory subunit of SCN5A/Nav1.5. Interacts with SCN8A; regulatory subunit of SCN8A/Nav1.6. Interacts with SCN9A; regulatory subunit of SCN9A/Nav1.7. Interacts with SCN10A; regulatory subunit of SCN10A/Nav1.8. Interacts with NFASC. Interacts with TMEM65. As to expression, the overall expression of isoform 1 and isoform 2 is very similar. Isoform 1 is abundantly expressed in skeletal muscle, heart and brain. Isoform 2 is highly expressed in brain and skeletal muscle and present at a very low level in heart, placenta, lung, liver, kidney and pancreas. In brain, isoform 2 is most abundant in the cerebellum, followed by the cerebral cortex and occipital lobe, while isoform 1 levels are higher in the cortex compared to the cerebellum. Isoform 2 is expressed in many regions of the brain, including cerebellar Purkinje cells, cortex pyramidal neurons and many of the neuronal fibers throughout the brain (at protein level). Also detected in dorsal root ganglion, in fibers of the spinal nerve and in cortical neurons and their processes (at protein level).

It localises to the cell membrane. It is found in the perikaryon. Its subcellular location is the cell projection. The protein localises to the axon. The protein resides in the secreted. Its function is as follows. Regulatory subunit of multiple voltage-gated sodium (Nav) channels directly mediating the depolarization of excitable membranes. Navs, also called VGSCs (voltage-gated sodium channels) or VDSCs (voltage-dependent sodium channels), operate by switching between closed and open conformations depending on the voltage difference across the membrane. In the open conformation they allow Na(+) ions to selectively pass through the pore, along their electrochemical gradient. The influx of Na+ ions provokes membrane depolarization, initiating the propagation of electrical signals throughout cells and tissues. The accessory beta subunits participate in localization and functional modulation of the Nav channels. Modulates the activity of SCN1A/Nav1.1, SCN2A/Nav1.2, SCN3A/Nav1.3, SCN4A/Nav1.4, SCN5A/Nav1.5, SCN8A/Nav1.6, SCN9A/Nav1.7 and SCN10A/Nav1.8. Functionally, cell adhesion molecule that plays a critical role in neuronal migration and pathfinding during brain development. Stimulates neurite outgrowth. Has no regulatory function on the SCN2A sodium channel complex. The chain is Sodium channel regulatory subunit beta-1 from Homo sapiens (Human).